The chain runs to 310 residues: MSTIEKHTQIVKKTASKLGFDYCGIAEATFLEEEAPKLENWLNKNYHGKMAYMANHFDKRLDPRKLVEGAKSVVSLMFNYYPQQNLDESRNALKIAKYAYGEDYHFVIKDKLKEFLKCLKEEIGEVHGRVFVDSAPVMERQWAVKAGLGWKGKNSLLLNKSSGSFFFLAELIIDLPLIYDNPSDKDYCGTCTRCVDACPTDAILQDNLIDGSKCISYLTIELKEAIPDDFKGKMENWVFGCDICQDVCPWNRFSKPHKEEAFLPHADLEKSAWEEMTKETFNKVFKRSALKRTKWEGFQRNIHFVKNEAS.

D133 acts as the Proton donor in catalysis. The region spanning 179 to 208 (YDNPSDKDYCGTCTRCVDACPTDAILQDNL) is the 4Fe-4S ferredoxin-type domain. C188, C191, C194, C198, C214, C241, C244, and C248 together coordinate [4Fe-4S] cluster.

This sequence belongs to the QueG family. In terms of assembly, monomer. It depends on cob(II)alamin as a cofactor. [4Fe-4S] cluster is required as a cofactor.

The protein localises to the cytoplasm. It carries out the reaction epoxyqueuosine(34) in tRNA + AH2 = queuosine(34) in tRNA + A + H2O. Its pathway is tRNA modification; tRNA-queuosine biosynthesis. Catalyzes the conversion of epoxyqueuosine (oQ) to queuosine (Q), which is a hypermodified base found in the wobble positions of tRNA(Asp), tRNA(Asn), tRNA(His) and tRNA(Tyr). This is Epoxyqueuosine reductase from Cyclobacterium marinum (strain ATCC 25205 / DSM 745 / LMG 13164 / NCIMB 1802) (Flectobacillus marinus).